The primary structure comprises 592 residues: Frizzled-9 (592 aa).

The N-terminal stretch at 1 to 23 is a signal peptide; that stretch reads MAVPPLLRGALLLWQLLATGGAA. At 24–230 the chain is on the extracellular side; that stretch reads LEIGRFDPER…EVFWSRRDKD (207 aa). Positions 35–156 constitute an FZ domain; sequence RGPAPCQAME…NDPHALCMEA (122 aa). 5 disulfide bridges follow: Cys-40-Cys-101, Cys-48-Cys-94, Cys-85-Cys-123, Cys-112-Cys-153, and Cys-116-Cys-140. Residue Asn-54 is glycosylated (N-linked (GlcNAc...) asparagine). Residues 59-173 form a required for Wnt-activated receptor activity region; sequence PNLLGHTSQG…PTEPHKGLGM (115 aa). Asn-159 carries an N-linked (GlcNAc...) asparagine glycan. Residues 231–251 form a helical membrane-spanning segment; it reads FALVWMAVWSALCFFSTAFTV. Over 252 to 267 the chain is Cytoplasmic; it reads FTFLLEPHRFQYPERP. The chain crosses the membrane as a helical span at residues 268–288; that stretch reads IIFLSMCYNVYSLAFLIRAVA. The Extracellular segment spans residues 289 to 316; the sequence is GAQSVACDQEAGALYVIQEGLENTGCTL. Residues 317–337 traverse the membrane as a helical segment; it reads VFLLLYYFGMASSLWWVVLTL. The Cytoplasmic portion of the chain corresponds to 338-356; it reads TWFLAAGKKWGHEAIEAHG. A helical membrane pass occupies residues 357–377; it reads SYFHMAAWGLPALKTIVVLTL. The Extracellular segment spans residues 378 to 401; that stretch reads RKVAGDELTGLCYVASMDPAALTG. Residues 402–422 form a helical membrane-spanning segment; that stretch reads FVLVPLSCYLVLGTSFLLTGF. Over 423-448 the chain is Cytoplasmic; sequence VALFHIRKIMKTGGTNTEKLEKLMVK. The helical transmembrane segment at 449–469 threads the bilayer; sequence IGVFSILYTVPATCVIVCYVY. Topologically, residues 470–509 are extracellular; the sequence is ERLNMDFWRLRATEQPCTAATVPGGRRDCSLPGGSVPTVA. The helical transmembrane segment at 510 to 530 threads the bilayer; sequence VFMLKIFMSLVVGITSGVWVW. Residues 531-592 lie on the Cytoplasmic side of the membrane; sequence SSKTFQTWQS…DPSLENPTHL (62 aa). The Lys-Thr-X-X-X-Trp motif, mediates interaction with the PDZ domain of Dvl family members motif lies at 533–538; that stretch reads KTFQTW. The interval 555–592 is required for CTNNB1 accumulation and TCF transcription factor activity; that stretch reads ACRTPGGYGRGTHCHYKAPTVVLHMTKTDPSLENPTHL.

This sequence belongs to the G-protein coupled receptor Fz/Smo family. Post-translationally, ubiquitinated by ZNRF3, leading to its degradation by the proteasome. In terms of tissue distribution, in the embryo, found in the neural tube, trunk skeletal muscle precursors (myotomes), limb skeletal anlagen, craniofacial regions and nephric ducts. In the adult, expression is abundant in heart, brain, testis and skeletal muscle. In the testis, expressed in all spermatogenic cell types. Lower levels in adult lung, liver and kidney. Barely detectable in spleen. Expressed also in chondrocytes.

Its subcellular location is the cell membrane. Functionally, receptor for WNT2 that is coupled to the beta-catenin canonical signaling pathway, which leads to the activation of disheveled proteins, inhibition of GSK-3 kinase, nuclear accumulation of beta-catenin and activation of Wnt target genes. Plays a role in neuromuscular junction (NMJ) assembly by negatively regulating the clustering of acetylcholine receptors (AChR) through the beta-catenin canonical signaling pathway. May play a role in neural progenitor cells (NPCs) viability through the beta-catenin canonical signaling pathway by negatively regulating cell cycle arrest leading to inhibition of neuron apoptotic process. During hippocampal development, regulates neuroblast proliferation and apoptotic cell death. Controls bone formation through non canonical Wnt signaling mediated via ISG15. Positively regulates bone regeneration through non canonical Wnt signaling. This Mus musculus (Mouse) protein is Frizzled-9 (Fzd9).